Reading from the N-terminus, the 44-residue chain is Protein PsbN (44 aa).

The chain crosses the membrane as a helical span at residues 6 to 26 (FFFTIFVWFLLISVTGYSIYV).

The protein belongs to the PsbN family.

It localises to the plastid. Its subcellular location is the chloroplast thylakoid membrane. Functionally, may play a role in photosystem I and II biogenesis. This chain is Protein PsbN, found in Bigelowiella natans (Pedinomonas minutissima).